The following is a 442-amino-acid chain: UDP-N-acetylmuramate--L-alanine ligase (442 aa).

109 to 115 is a binding site for ATP; sequence GAHGKTS.

This sequence belongs to the MurCDEF family.

The protein resides in the cytoplasm. The catalysed reaction is UDP-N-acetyl-alpha-D-muramate + L-alanine + ATP = UDP-N-acetyl-alpha-D-muramoyl-L-alanine + ADP + phosphate + H(+). It participates in cell wall biogenesis; peptidoglycan biosynthesis. Functionally, cell wall formation. The sequence is that of UDP-N-acetylmuramate--L-alanine ligase from Streptococcus pyogenes serotype M28 (strain MGAS6180).